The primary structure comprises 128 residues: Small ribosomal subunit protein uS11 (128 aa).

The protein belongs to the universal ribosomal protein uS11 family. As to quaternary structure, part of the 30S ribosomal subunit. Interacts with proteins S7 and S18. Binds to IF-3.

Its function is as follows. Located on the platform of the 30S subunit, it bridges several disparate RNA helices of the 16S rRNA. Forms part of the Shine-Dalgarno cleft in the 70S ribosome. This chain is Small ribosomal subunit protein uS11, found in Synechococcus sp. (strain JA-3-3Ab) (Cyanobacteria bacterium Yellowstone A-Prime).